Reading from the N-terminus, the 868-residue chain is Leucine-rich repeat receptor-like serine/threonine-protein kinase At2g14510 (868 aa).

The signal sequence occupies residues 1–23 (METRNKFMLLACATFSIMSLVKS). The Extracellular segment spans residues 24-510 (QNQQGFISLD…KHQPKSWLVA (487 aa)). N-linked (GlcNAc...) asparagine glycosylation is found at N48, N68, N231, N235, N258, N291, N433, and N446. LRR repeat units follow at residues 412–435 (RIISLDLSLSGLTGVISPSIQNLT), 436–458 (MLRELDLSNNNLTGEVPEFLATI), and 460–482 (PLLVIHLRGNNLRGSVPQALQDR). N495 is a glycosylation site (N-linked (GlcNAc...) asparagine). Residues 511 to 531 (IVASISCVAVTIIVLVLIFIF) traverse the membrane as a helical segment. Topologically, residues 532 to 868 (RRRKSSTRKV…TFISDIPSAR (337 aa)) are cytoplasmic. The region spanning 563–832 (NNFEVVLGKG…NMTRVAHELN (270 aa)) is the Protein kinase domain. ATP is bound by residues 569–577 (LGKGGFGVV) and K590. At Y635 the chain carries Phosphotyrosine. D687 serves as the catalytic Proton acceptor. The residue at position 721 (S721) is a Phosphoserine. T722 and T727 each carry phosphothreonine. Residue Y735 is modified to Phosphotyrosine.

This sequence belongs to the protein kinase superfamily. Ser/Thr protein kinase family.

It is found in the cell membrane. The catalysed reaction is L-seryl-[protein] + ATP = O-phospho-L-seryl-[protein] + ADP + H(+). It carries out the reaction L-threonyl-[protein] + ATP = O-phospho-L-threonyl-[protein] + ADP + H(+). The protein is Leucine-rich repeat receptor-like serine/threonine-protein kinase At2g14510 of Arabidopsis thaliana (Mouse-ear cress).